Consider the following 345-residue polypeptide: uncharacterized protein (345 aa).

The protein belongs to the cycloisomerase 2 family.

This is an uncharacterized protein from Staphylococcus saprophyticus subsp. saprophyticus (strain ATCC 15305 / DSM 20229 / NCIMB 8711 / NCTC 7292 / S-41).